A 1979-amino-acid polypeptide reads, in one-letter code: Repetitive organellar protein (1979 aa).

The segment covering 1 to 12 (MVFTFKNKKKKK) has biased composition (basic residues). Disordered stretches follow at residues 1–42 (MVFT…DSWY) and 54–116 (TKYK…NNYS). Composition is skewed to basic and acidic residues over residues 13–24 (EASSDKVSKESF) and 31–42 (NNEKREKSDSWY). Low complexity predominate over residues 68–114 (EDIINNNNNNNNDNNNDNNNDNNNDNNNDNNNDNNNENNNDNNNFNN). Coiled-coil stretches lie at residues 127–366 (DNEL…LKDE), 412–666 (LKVY…EMEL), 693–876 (LKES…KKKQ), 992–1094 (KKKH…YKTI), 1126–1307 (VDKI…MNIK), and 1398–1467 (IANY…LTSQ).

The protein resides in the host cell membrane. The protein is Repetitive organellar protein of Plasmodium falciparum (isolate 3D7).